Consider the following 568-residue polypeptide: Glucose-6-phosphate isomerase, cytosolic (568 aa).

Glu360 functions as the Proton donor in the catalytic mechanism. Catalysis depends on residues His391 and Lys516.

Belongs to the GPI family. In terms of assembly, homodimer.

It is found in the cytoplasm. It carries out the reaction alpha-D-glucose 6-phosphate = beta-D-fructose 6-phosphate. It functions in the pathway carbohydrate degradation; glycolysis; D-glyceraldehyde 3-phosphate and glycerone phosphate from D-glucose: step 2/4. The protein is Glucose-6-phosphate isomerase, cytosolic (PGIC) of Oenothera sinuata var. hirsuta (Mexican evening primrose).